We begin with the raw amino-acid sequence, 64 residues long: Large ribosomal subunit protein bL35 (64 aa).

Polar residues predominate over residues Met1 to Ala10. The segment at Met1–Lys64 is disordered. The segment covering Gln54 to Lys64 has biased composition (basic residues).

Belongs to the bacterial ribosomal protein bL35 family.

This chain is Large ribosomal subunit protein bL35, found in Bifidobacterium longum (strain NCC 2705).